Consider the following 542-residue polypeptide: N-substituted formamide deformylase (542 aa).

The propeptide occupies 1-2 (MT).

Homodimer. It depends on Zn(2+) as a cofactor.

The catalysed reaction is N-benzylformamide + H2O = benzylamine + formate. Completely inhibited by HgCl(2), CuCl, CuCl(2) and AgNO(3). Partially inhibited by ZnCl(2) and SnCl(2). Almost completely inhibited by the reducing reagent DTT. Partially inhibited by phenylhydrazine. Moderately inhibited by phenanthroline and 8-hydroxyquinoline. Completely inhibited by the thiol-specific inhibitors N-ethylmaleimide and p-chloromercuribenzoate. Not inhibited by the carbonyl-specific inhibitors aminoguanidine and semicarbazide, the chelating agents alpha,alpha'-dipyridyl, KCN, diethyldithiocarbamate and EDTA, or the oxidizing reagents and serine-modifying reagents such as H(2)O(2), ammonium persulfate, phenylmethanesulfonyl fluoride and diisopropyl fluorophosphates. In terms of biological role, hydrolyzes N-substituted formamides, but not amides. N-benzylformamide is the preferred substrate, while N-butylformamide is hydrolyzed at a much lower rate. Has very low activity towards allylformamide, N-(2-cyclohex-1-enylethyl)formamide and N-(alpha-methylbenzyl)formamide. The sequence is that of N-substituted formamide deformylase from Arthrobacter pascens.